The sequence spans 59 residues: Dendroaspin (59 aa).

Disulfide bonds link C3–C22, C17–C37, C39–C51, and C52–C57. The Cell attachment site motif lies at 43–45 (RGD).

It belongs to the three-finger toxin family. Short-chain subfamily. Antiplatelet toxin sub-subfamily. Expressed by the venom gland.

Its subcellular location is the secreted. Functionally, inhibits ADP-induced platelet aggregation and inhibits the binding of purified platelet fibrinogen receptor alpha-IIb/beta-3 (ITGA2B/ITGB3) to immobilized fibrinogen. Has also been described to inhibit cell adhesion to fibrinogen, fibronectin, laminin and collagen. The polypeptide is Dendroaspin (Dendroaspis jamesoni kaimosae (Eastern Jameson's mamba)).